The following is a 78-amino-acid chain: Large ribosomal subunit protein bL28 (78 aa).

This sequence belongs to the bacterial ribosomal protein bL28 family.

In Pectobacterium carotovorum subsp. carotovorum (strain PC1), this protein is Large ribosomal subunit protein bL28.